We begin with the raw amino-acid sequence, 269 residues long: Formamidopyrimidine-DNA glycosylase (269 aa).

P2 serves as the catalytic Schiff-base intermediate with DNA. E3 serves as the catalytic Proton donor. K57 (proton donor; for beta-elimination activity) is an active-site residue. Positions 90, 109, and 150 each coordinate DNA. The FPG-type zinc-finger motif lies at 235-269 (QVYGRKGEPCRVCGTPIVATKHAQRATFYCRHCQK). The active-site Proton donor; for delta-elimination activity is R259.

The protein belongs to the FPG family. In terms of assembly, monomer. The cofactor is Zn(2+).

It carries out the reaction Hydrolysis of DNA containing ring-opened 7-methylguanine residues, releasing 2,6-diamino-4-hydroxy-5-(N-methyl)formamidopyrimidine.. The catalysed reaction is 2'-deoxyribonucleotide-(2'-deoxyribose 5'-phosphate)-2'-deoxyribonucleotide-DNA = a 3'-end 2'-deoxyribonucleotide-(2,3-dehydro-2,3-deoxyribose 5'-phosphate)-DNA + a 5'-end 5'-phospho-2'-deoxyribonucleoside-DNA + H(+). Its function is as follows. Involved in base excision repair of DNA damaged by oxidation or by mutagenic agents. Acts as a DNA glycosylase that recognizes and removes damaged bases. Has a preference for oxidized purines, such as 7,8-dihydro-8-oxoguanine (8-oxoG). Has AP (apurinic/apyrimidinic) lyase activity and introduces nicks in the DNA strand. Cleaves the DNA backbone by beta-delta elimination to generate a single-strand break at the site of the removed base with both 3'- and 5'-phosphates. In Salmonella heidelberg (strain SL476), this protein is Formamidopyrimidine-DNA glycosylase.